A 270-amino-acid chain; its full sequence is uncharacterized protein (270 aa).

The HTH lysR-type domain occupies 1–50 (LTEVVKAQSFTKAAENLYTSQPSISRDIKRLENDYDVKVFEFKHSKMTLT). Positions 10–29 (FTKAAENLYTSQPSISRDIK) form a DNA-binding region, H-T-H motif.

This sequence belongs to the LysR transcriptional regulatory family.

This is an uncharacterized protein from Staphylococcus xylosus.